A 34-amino-acid polypeptide reads, in one-letter code: Cytochrome b6-f complex subunit 7 (34 aa).

The helical transmembrane segment at 9–27 threads the bilayer; that stretch reads AILSFGLIFVGWGLGALLL.

It belongs to the PetM family. The 4 large subunits of the cytochrome b6-f complex are cytochrome b6, subunit IV (17 kDa polypeptide, PetD), cytochrome f and the Rieske protein, while the 4 small subunits are PetG, PetL, PetM and PetN. The complex functions as a dimer.

It is found in the cellular thylakoid membrane. Component of the cytochrome b6-f complex, which mediates electron transfer between photosystem II (PSII) and photosystem I (PSI), cyclic electron flow around PSI, and state transitions. This Nostoc punctiforme (strain ATCC 29133 / PCC 73102) protein is Cytochrome b6-f complex subunit 7.